Reading from the N-terminus, the 283-residue chain is Nucleotide-binding protein ACIAD3059 (283 aa).

9–16 (GQSGSGKS) lines the ATP pocket. 59 to 62 (DVRS) is a GTP binding site.

The protein belongs to the RapZ-like family.

Functionally, displays ATPase and GTPase activities. This chain is Nucleotide-binding protein ACIAD3059, found in Acinetobacter baylyi (strain ATCC 33305 / BD413 / ADP1).